We begin with the raw amino-acid sequence, 327 residues long: GTPase Obg (327 aa).

The Obg domain occupies 1–159; it reads MQFIDQANII…WEVQLELKLL (159 aa). The OBG-type G domain maps to 160–327; the sequence is AEVGIIGLPN…SLLSEVWKRI (168 aa). Residues 166-173, 191-195, 213-216, 280-283, and 309-311 each bind ATP; these read GLPNAGKS, FTTLI, DIPG, NKME, and SSS. Ser-173 and Thr-193 together coordinate Mg(2+).

It belongs to the TRAFAC class OBG-HflX-like GTPase superfamily. OBG GTPase family. In terms of assembly, monomer. Mg(2+) is required as a cofactor.

Its subcellular location is the cytoplasm. An essential GTPase which binds GTP, GDP and possibly (p)ppGpp with moderate affinity, with high nucleotide exchange rates and a fairly low GTP hydrolysis rate. Plays a role in control of the cell cycle, stress response, ribosome biogenesis and in those bacteria that undergo differentiation, in morphogenesis control. The sequence is that of GTPase Obg from Prochlorococcus marinus (strain MIT 9301).